Here is a 379-residue protein sequence, read N- to C-terminus: Cytochrome b (379 aa).

4 consecutive transmembrane segments (helical) span residues phenylalanine 33–methionine 53, tryptophan 77–alanine 98, tryptophan 113–leucine 133, and phenylalanine 178–leucine 198. Heme b-binding residues include histidine 83 and histidine 97. Heme b-binding residues include histidine 182 and histidine 196. Histidine 201 provides a ligand contact to a ubiquinone. The next 4 membrane-spanning stretches (helical) occupy residues isoleucine 226–phenylalanine 246, leucine 288–asparagine 308, isoleucine 320–glycine 340, and phenylalanine 347–proline 367.

The protein belongs to the cytochrome b family. The cytochrome bc1 complex contains 11 subunits: 3 respiratory subunits (MT-CYB, CYC1 and UQCRFS1), 2 core proteins (UQCRC1 and UQCRC2) and 6 low-molecular weight proteins (UQCRH/QCR6, UQCRB/QCR7, UQCRQ/QCR8, UQCR10/QCR9, UQCR11/QCR10 and a cleavage product of UQCRFS1). This cytochrome bc1 complex then forms a dimer. Heme b serves as cofactor.

The protein localises to the mitochondrion inner membrane. Functionally, component of the ubiquinol-cytochrome c reductase complex (complex III or cytochrome b-c1 complex) that is part of the mitochondrial respiratory chain. The b-c1 complex mediates electron transfer from ubiquinol to cytochrome c. Contributes to the generation of a proton gradient across the mitochondrial membrane that is then used for ATP synthesis. This chain is Cytochrome b (MT-CYB), found in Thaptomys nigrita (Blackish grass mouse).